The sequence spans 110 residues: Small ribosomal subunit protein bS6 (110 aa).

The protein belongs to the bacterial ribosomal protein bS6 family.

In terms of biological role, binds together with bS18 to 16S ribosomal RNA. This is Small ribosomal subunit protein bS6 (rpsF) from Aquifex aeolicus (strain VF5).